A 373-amino-acid chain; its full sequence is MTAPSMSRPDDVRPEVLDFKPYVPGLSIDEIRDRFGLADVVKLASNENPLGTSPVVQRTLKTKADLAFRYAQSGNPRLTRAIAAHHGVAPERVVAGNGSDEIIDLLIRVRATPGKHNIVAFRPCFSIYELQAKFCGLEFRQADLRPDFTFDWDAFLAATDENTAIAFVTTPDNPSGWCPPVSELEHVARTLPPSCLFVIDEAYMDFCGDEAAHSLLSRLDAFPNIAVLRTFSKSFGLAGLRLGYGILPERLADYLHRVRLPFSVNILAEEAGLAALEDTVFRSETLRVTAEGRAYIAEGLTALGCEVLPSWANFIMFRPPTDATDLFEALLRRGIIIRPLKSYGLPQHLRVSMGNADENRRFIAACKEILPHA.

Lys233 bears the N6-(pyridoxal phosphate)lysine mark.

It belongs to the class-II pyridoxal-phosphate-dependent aminotransferase family. Histidinol-phosphate aminotransferase subfamily. As to quaternary structure, homodimer. Pyridoxal 5'-phosphate serves as cofactor.

The catalysed reaction is L-histidinol phosphate + 2-oxoglutarate = 3-(imidazol-4-yl)-2-oxopropyl phosphate + L-glutamate. Its pathway is amino-acid biosynthesis; L-histidine biosynthesis; L-histidine from 5-phospho-alpha-D-ribose 1-diphosphate: step 7/9. This is Histidinol-phosphate aminotransferase from Nitratidesulfovibrio vulgaris (strain DP4) (Desulfovibrio vulgaris).